An 814-amino-acid chain; its full sequence is MKVKVSGEYTLAEIEVELDQQLTPDDLQPGATVLATNESTGGLERIVSHEELSRFFAVGPAGALPMPTDVVVERTLADPAFKQILQEADGKKGFDPQAEQMKIRDFLAGVTSSKMTTEQSVFHGSRSNSSASTVNRIKCPTCLVQFDAVAFQNHSCEAKPIEVAVPQQEKPHLVPTVSAPPAPLSKPASERVIRENQVRLRRYIKDEMKYDLATGIESSRKNAAKGPNECTMCDRKFVHASGLVRHMEKHALDLIPSQTSEQPHTIPAAGLHVVVKCNSCGRIFYDPQVAFRHGLIHDSEHSTMRQSPMTQVPSNRADFNELLLDGEMLIDNDPAFATSNQNTNPPKKEMFSSLILGSVLQCEFCEYIFADIAELLVHSASHVAERRFECTACDIQMNTAKEASIHFQTDCIFMREAIRSLNVTLSRYFVCNVCELKFANTDLLQEHRCTSFHYFPRLNENGKKLLLPCDFCDVNFEFAHDFLAHSEEKHLNKKKREKETRNTGAGRIRQYLCDICGKSYTQSSHLWQHLRFHQGVKPFVCQEENCDRKFTIRPDLNDHIRKCHTGERPYLCLVCGKRFLTGSVFYQHRLIHRGERRYECEECGKRFYRADALKNHQRIHTGEKPYSCLFCTKTFRQRGDRDKHIRARHSHLDANSRLMMQMQKFQLETAAAQKAQSHNPEQQDNDVAGGASTSDVPSGSGFMSTEPSVAEMQYSITPEQQEEMVCVPIDEVNNSFFMSHYMQAVPMEEDGSGQHIIVFEQPGQNMDMMSIYDQQQVGEPMHESGVPKRPAEENARVVVVKNNPTKPIFSDTYL.

10 consecutive C2H2-type zinc fingers follow at residues 228 to 250 (NECTMCDRKFVHASGLVRHMEKH), 275 to 297 (VKCNSCGRIFYDPQVAFRHGLIH), 360 to 382 (LQCEFCEYIFADIAELLVHSASH), 429 to 453 (FVCNVCELKFANTDLLQEHRCTSFH), 467 to 490 (LPCDFCDVNFEFAHDFLAHSEEKH), 511 to 533 (YLCDICGKSYTQSSHLWQHLRFH), 539 to 564 (FVCQEENCDRKFTIRPDLNDHIRKCH), 570 to 592 (YLCLVCGKRFLTGSVFYQHRLIH), 598 to 620 (YECEECGKRFYRADALKNHQRIH), and 626 to 649 (YSCLFCTKTFRQRGDRDKHIRARH). Positions 669–705 (TAAAQKAQSHNPEQQDNDVAGGASTSDVPSGSGFMST) are disordered. A compositionally biased stretch (polar residues) spans 691-705 (ASTSDVPSGSGFMST).

As to quaternary structure, interacts with comr. Expressed in testis; primary spermatocytes.

Its subcellular location is the nucleus. Functionally, required for male meiotic division and spermatid differentiation. Required for accumulation of aly and comr on chromatin. May function as a transcription factor. This chain is Testis-specific zinc finger protein topi (topi), found in Drosophila melanogaster (Fruit fly).